We begin with the raw amino-acid sequence, 104 residues long: Seminal ribonuclease (104 aa).

4 cysteine pairs are disulfide-bonded: C12–C70, C26–C81, C44–C96, and C51–C58. Residues 27-31, K52, and R71 each bind substrate; that span reads KPVNT.

It belongs to the pancreatic ribonuclease family. Homodimer; disulfide-linked.

It is found in the secreted. It catalyses the reaction an [RNA] containing cytidine + H2O = an [RNA]-3'-cytidine-3'-phosphate + a 5'-hydroxy-ribonucleotide-3'-[RNA].. The enzyme catalyses an [RNA] containing uridine + H2O = an [RNA]-3'-uridine-3'-phosphate + a 5'-hydroxy-ribonucleotide-3'-[RNA].. The sequence is that of Seminal ribonuclease (SRN) from Saiga tatarica (Saiga antelope).